The chain runs to 355 residues: D-alanine--D-alanine ligase (355 aa).

Residues 143 to 350 (KTIFSNLKIP…IEQLVAKLVD (208 aa)) form the ATP-grasp domain. Position 178–233 (178–233 (LKKLNFPFFVKPSNSGSSLGISKVINESEILQSLEKAQKIDSRILVEEGLEVREIE)) interacts with ATP. Residues Asp-303, Glu-317, and Asn-319 each coordinate Mg(2+).

It belongs to the D-alanine--D-alanine ligase family. Mg(2+) serves as cofactor. Requires Mn(2+) as cofactor.

It localises to the cytoplasm. The enzyme catalyses 2 D-alanine + ATP = D-alanyl-D-alanine + ADP + phosphate + H(+). It functions in the pathway cell wall biogenesis; peptidoglycan biosynthesis. Functionally, cell wall formation. The sequence is that of D-alanine--D-alanine ligase from Prochlorococcus marinus (strain MIT 9215).